Consider the following 186-residue polypeptide: Coiled-coil domain-containing protein ORF13 (186 aa).

Coiled-coil stretches lie at residues glycine 2 to lysine 30 and leucine 63 to lysine 85.

This Helicobacter pylori (strain 35A) protein is Coiled-coil domain-containing protein ORF13.